A 925-amino-acid chain; its full sequence is Centrosomal protein of 104 kDa (925 aa).

The stretch at 209–289 (EVAQIIRKLD…RAEVYEQLEL (81 aa)) forms a coiled coil. HEAT repeat units follow at residues 529 to 567 (TIPVLLTRTGDSSARLRVTAANFIQEMALFKEVKSLQII) and 604 to 640 (GFTIDNVMKFSVSALEHRVYEVRETAVRIILDMYRQH). The stretch at 677-725 (DAEMRARRKAATEEAEKQKKEEIKALQGQLAALKEIQAEVQEKESDAVK) forms a coiled coil. Positions 883–925 (PALQPGKSSAVAASGPLGSKAGSKIPTPKGGLSKSSSRTYAKR) are disordered. Positions 915-925 (SKSSSRTYAKR) are enriched in polar residues.

As to quaternary structure, interacts with CCP110 and CEP97. Interacts with ARMC9, TOGARAM1, CCDC66 and CSPP1.

It localises to the cell projection. The protein localises to the cilium. Its subcellular location is the cytoplasm. It is found in the cytoskeleton. The protein resides in the microtubule organizing center. It localises to the centrosome. The protein localises to the centriole. Its subcellular location is the spindle pole. Required for ciliogenesis and for structural integrity at the ciliary tip. The protein is Centrosomal protein of 104 kDa (CEP104) of Homo sapiens (Human).